The chain runs to 325 residues: Aldo-keto reductase family 1 member A1 (325 aa).

The residue at position 2 (Ala2) is an N-acetylalanine. Ser4 is modified (phosphoserine). NADP(+)-binding positions include 11–20, Thr21, and Trp22; that span reads GQKMPLIGLG. Phosphoserine is present on Ser38. Asp45 provides a ligand contact to NADP(+). Residue Tyr50 is the Proton donor of the active site. N6-acetyllysine; alternate is present on Lys127. An N6-succinyllysine; alternate modification is found at Lys127. NADP(+) is bound by residues Ser162, Asn163, Ser211, Leu213, Ser215, Ser216, Lys263, Ser264, Val265, Thr266, Arg269, and Asn273. Ser211 is modified (phosphoserine).

It belongs to the aldo/keto reductase family. As to quaternary structure, monomer.

The protein resides in the cytoplasm. The protein localises to the cytosol. It is found in the apical cell membrane. It carries out the reaction a primary alcohol + NADP(+) = an aldehyde + NADPH + H(+). The catalysed reaction is L-gulonate + NADP(+) = aldehydo-D-glucuronate + NADPH + H(+). It catalyses the reaction L-gulono-1,4-lactone + NADP(+) = D-glucurono-3,6-lactone + NADPH + H(+). The enzyme catalyses allyl alcohol + NADP(+) = acrolein + NADPH + H(+). It carries out the reaction glycerol + NADP(+) = D-glyceraldehyde + NADPH + H(+). The catalysed reaction is glycerol + NADP(+) = L-glyceraldehyde + NADPH + H(+). It catalyses the reaction hydroxyacetone + NADP(+) = methylglyoxal + NADPH + H(+). The enzyme catalyses 3-deoxyfructose + NADP(+) = 3-deoxyglucosone + NADPH + H(+). It carries out the reaction (R)-mevalonate + NADP(+) = (R)-mevaldate + NADPH + H(+). The catalysed reaction is pyridine 3-methanol + NADP(+) = pyridine-3-carbaldehyde + NADPH + H(+). It catalyses the reaction S-nitroso-CoA + NADPH + H(+) = sulfinamide-CoA + NADP(+). The enzyme catalyses S-nitrosoglutathione + NADPH + H(+) = S-(hydroxysulfenamide)glutathione + NADP(+). Catalyzes the NADPH-dependent reduction of a wide variety of carbonyl-containing compounds to their corresponding alcohols. Displays enzymatic activity towards endogenous metabolites such as aromatic and aliphatic aldehydes, ketones, monosaccharides and bile acids, with a preference for negatively charged substrates, such as glucuronate and succinic semialdehyde. Plays an important role in ascorbic acid biosynthesis by catalyzing the reduction of D-glucuronic acid and D-glucurono-gamma-lactone. Functions as a detoxifiying enzyme by reducing a range of toxic aldehydes. Reduces methylglyoxal and 3-deoxyglucosone, which are present at elevated levels under hyperglycemic conditions and are cytotoxic. Involved also in the detoxification of lipid-derived aldehydes like acrolein. Plays a role in the activation of procarcinogens, such as polycyclic aromatic hydrocarbon trans-dihydrodiols, and in the metabolism of various xenobiotics and drugs. Also acts as an inhibitor of protein S-nitrosylation by mediating degradation of S-nitroso-coenzyme A (S-nitroso-CoA), a cofactor required to S-nitrosylate proteins. S-nitroso-CoA reductase activity is involved in reprogramming intermediary metabolism in renal proximal tubules, notably by inhibiting protein S-nitrosylation of isoform 2 of PKM (PKM2). Also acts as a S-nitroso-glutathione reductase by catalyzing the NADPH-dependent reduction of S-nitrosoglutathione. Displays no reductase activity towards retinoids. The chain is Aldo-keto reductase family 1 member A1 from Bos taurus (Bovine).